The primary structure comprises 788 residues: Cadherin-10 (788 aa).

Positions 1–22 are cleaved as a signal peptide; the sequence is MTIYQFLRLFVLWACLPHFCCP. A propeptide spanning residues 23 to 54 is cleaved from the precursor; sequence ELTFRRTPGIQQMTAESRAPRSDGKILHRQKR. The Extracellular portion of the chain corresponds to 23–613; it reads ELTFRRTPGI…LLPAGLSTGA (591 aa). 5 Cadherin domains span residues 56-160, 161-269, 270-384, 385-489, and 489-603; these read WMWN…EPTF, PEEI…PPRF, PQNT…PPVF, SRSS…APQF, and FAVF…AEAL. An N-linked (GlcNAc...) asparagine glycan is attached at N256. Residues N456 and N534 are each glycosylated (N-linked (GlcNAc...) asparagine). The chain crosses the membrane as a helical span at residues 614 to 634; sequence LIAILLCIIILLVIVVLFAAL. Residues 635–788 are Cytoplasmic-facing; that stretch reads KRQRKKEPLI…YGGGESDKDA (154 aa). S784 carries the post-translational modification Phosphoserine.

Its subcellular location is the cell membrane. In terms of biological role, cadherins are calcium-dependent cell adhesion proteins. They preferentially interact with themselves in a homophilic manner in connecting cells; cadherins may thus contribute to the sorting of heterogeneous cell types. The sequence is that of Cadherin-10 (Cdh10) from Mus musculus (Mouse).